We begin with the raw amino-acid sequence, 247 residues long: Oil body-associated protein 2B (247 aa).

Residues 1 to 28 form a disordered region; the sequence is MASSDKVPVACPASSGDGKEPMGNPTKT.

Belongs to the OBAP family.

The protein is Oil body-associated protein 2B of Arabidopsis thaliana (Mouse-ear cress).